A 337-amino-acid chain; its full sequence is Neurogenic differentiation factor 6 (337 aa).

Residues 43–82 are disordered; it reads LRGKSIKRAPGEETEKEEEEEDREEEDENGLPRRRGLRKK. Residues 54–71 are compositionally biased toward acidic residues; that stretch reads EETEKEEEEEDREEEDEN. The Nuclear localization signal motif lies at 80–86; sequence RKKKTTK. Positions 94-146 constitute a bHLH domain; that stretch reads FRRQEANARERNRMHGLNDALDNLRKVVPCYSKTQKLSKIETLRLAKNYIWAL.

As to quaternary structure, efficient DNA binding requires dimerization with another bHLH protein.

The protein resides in the nucleus. Activates E box-dependent transcription in collaboration with TCF3/E47. May be a trans-acting factor involved in the development and maintenance of the mammalian nervous system. Transactivates the promoter of its own gene. The sequence is that of Neurogenic differentiation factor 6 (NEUROD6) from Bos taurus (Bovine).